A 304-amino-acid chain; its full sequence is Neurexophilin-4 (304 aa).

An N-terminal signal peptide occupies residues 1 to 23 (MRLLPEWLLLLFGPWLLRKVISG). An II region spans residues 24–84 (QIVESGRPQY…GALARPGAAG (61 aa)). 4 N-linked (GlcNAc...) asparagine glycosylation sites follow: Asn72, Asn133, Asn143, and Asn149. Residues 85–163 (GPPVPRTKRK…IVPPSKRVEF (79 aa)) form an III region. Residues 164-220 (GGVWLPGPAPHPLQSTLALEGVLPGLGPPLGMAGQGLGGNLGGALAGPLGGALGVPG) are IV (linker domain). The interval 221 to 304 (AKESRAFNCH…NFQSEHPYFG (84 aa)) is v (Cys-rich).

It belongs to the neurexophilin family. May be proteolytically processed in neuron-like cells. Brain and kidney.

It is found in the secreted. Functionally, may be signaling molecules that resemble neuropeptides and that act by binding to alpha-neurexins and possibly other receptors. In Rattus norvegicus (Rat), this protein is Neurexophilin-4 (Nxph4).